A 943-amino-acid chain; its full sequence is Isoleucine--tRNA ligase 1 (943 aa).

The 'HIGH' region signature appears at 58-68; it reads PYANGTIHIGH. Position 567 (Glu-567) interacts with L-isoleucyl-5'-AMP. Residues 608-612 carry the 'KMSKS' region motif; sequence KMSKS. An ATP-binding site is contributed by Lys-611. Cys-906, Cys-909, Cys-926, and Cys-929 together coordinate Zn(2+).

This sequence belongs to the class-I aminoacyl-tRNA synthetase family. IleS type 1 subfamily. In terms of assembly, monomer. Requires Zn(2+) as cofactor.

Its subcellular location is the cytoplasm. It carries out the reaction tRNA(Ile) + L-isoleucine + ATP = L-isoleucyl-tRNA(Ile) + AMP + diphosphate. In terms of biological role, catalyzes the attachment of isoleucine to tRNA(Ile). As IleRS can inadvertently accommodate and process structurally similar amino acids such as valine, to avoid such errors it has two additional distinct tRNA(Ile)-dependent editing activities. One activity is designated as 'pretransfer' editing and involves the hydrolysis of activated Val-AMP. The other activity is designated 'posttransfer' editing and involves deacylation of mischarged Val-tRNA(Ile). Confers resistance to the antibiotic mupirocin (pseudomonic acid A), an Ile-analog produced by P.fluorescens NCIMB 10586 itself that competitively inhibits activation by Ile-tRNA synthetase, thus inhibiting protein biosynthesis. The polypeptide is Isoleucine--tRNA ligase 1 (ileS1) (Pseudomonas fluorescens).